The following is a 458-amino-acid chain: uncharacterized protein (458 aa).

The TRAM domain maps to 8–66 (PVEKNEFIDVVFEDLTHDGAGVAKVKGYPIFVKNGLPGEEAQIKIIKVKKNFAFGRLMK). The [4Fe-4S] cluster site is built by Cys-79, Cys-85, Cys-88, and Cys-166. Gln-290, Tyr-319, Glu-340, and Asp-388 together coordinate S-adenosyl-L-methionine. The Nucleophile role is filled by Cys-415.

This sequence belongs to the class I-like SAM-binding methyltransferase superfamily. RNA M5U methyltransferase family.

This is an uncharacterized protein from Bacillus cereus (strain ATCC 14579 / DSM 31 / CCUG 7414 / JCM 2152 / NBRC 15305 / NCIMB 9373 / NCTC 2599 / NRRL B-3711).